The primary structure comprises 420 residues: Exodeoxyribonuclease 7 large subunit (420 aa).

This sequence belongs to the XseA family. Heterooligomer composed of large and small subunits.

It localises to the cytoplasm. The enzyme catalyses Exonucleolytic cleavage in either 5'- to 3'- or 3'- to 5'-direction to yield nucleoside 5'-phosphates.. Functionally, bidirectionally degrades single-stranded DNA into large acid-insoluble oligonucleotides, which are then degraded further into small acid-soluble oligonucleotides. The polypeptide is Exodeoxyribonuclease 7 large subunit (Helicobacter pylori (strain HPAG1)).